The sequence spans 157 residues: Putative pre-16S rRNA nuclease (157 aa).

The protein belongs to the YqgF nuclease family.

It localises to the cytoplasm. Its function is as follows. Could be a nuclease involved in processing of the 5'-end of pre-16S rRNA. The polypeptide is Putative pre-16S rRNA nuclease (Nitrosomonas eutropha (strain DSM 101675 / C91 / Nm57)).